The following is a 363-amino-acid chain: 3-isopropylmalate dehydrogenase (363 aa).

Position 79-92 (79-92) interacts with NAD(+); that stretch reads GPKWEHLPPNDQPE. Positions 100, 110, 139, and 228 each coordinate substrate. 3 residues coordinate Mg(2+): Asp228, Asp252, and Asp256. An NAD(+)-binding site is contributed by 286–298; it reads GSAPDIAGKNIAN.

This sequence belongs to the isocitrate and isopropylmalate dehydrogenases family. LeuB type 1 subfamily. In terms of assembly, homodimer. Requires Mg(2+) as cofactor. The cofactor is Mn(2+).

The protein localises to the cytoplasm. It catalyses the reaction (2R,3S)-3-isopropylmalate + NAD(+) = 4-methyl-2-oxopentanoate + CO2 + NADH. The protein operates within amino-acid biosynthesis; L-leucine biosynthesis; L-leucine from 3-methyl-2-oxobutanoate: step 3/4. Catalyzes the oxidation of 3-carboxy-2-hydroxy-4-methylpentanoate (3-isopropylmalate) to 3-carboxy-4-methyl-2-oxopentanoate. The product decarboxylates to 4-methyl-2 oxopentanoate. In Aliivibrio fischeri (strain ATCC 700601 / ES114) (Vibrio fischeri), this protein is 3-isopropylmalate dehydrogenase.